The primary structure comprises 672 residues: Methionine--tRNA ligase (672 aa).

A 'HIGH' region motif is present at residues 12–22 (AYTNGPLHLGH). Residues Cys-144, Cys-147, Cys-156, and Cys-159 each coordinate Zn(2+). Positions 330-334 (KMSTS) match the 'KMSKS' region motif. Thr-333 lines the ATP pocket. Residues 573–672 (DFAKIELKVA…KDLPVGSTIC (100 aa)) enclose the tRNA-binding domain.

Belongs to the class-I aminoacyl-tRNA synthetase family. MetG type 1 subfamily. Homodimer. Zn(2+) is required as a cofactor.

The protein resides in the cytoplasm. It carries out the reaction tRNA(Met) + L-methionine + ATP = L-methionyl-tRNA(Met) + AMP + diphosphate. Functionally, is required not only for elongation of protein synthesis but also for the initiation of all mRNA translation through initiator tRNA(fMet) aminoacylation. In Methanococcus aeolicus (strain ATCC BAA-1280 / DSM 17508 / OCM 812 / Nankai-3), this protein is Methionine--tRNA ligase.